We begin with the raw amino-acid sequence, 512 residues long: RCC1 domain-containing protein DDB_G0279253 (512 aa).

RCC1 repeat units lie at residues 1–56 (MKIY…MIID), 58–134 (GDLY…ACDN), 135–185 (NGNI…NNNN), 197–248 (SGGV…ALSS), 249–319 (ENDV…LLDI), 321–384 (FKNV…LLTN), 386–443 (DKLY…IQVY), and 454–512 (NNNI…FILP). The segment covering 66–77 (NDSGQLGINSNE) has biased composition (polar residues). Disordered stretches follow at residues 66–85 (NDSG…QQQQ) and 162–200 (STSN…SGGV). Over residues 162–196 (STSNNKNNNNNNNNNNNNNNNNNNNNNNNNNNNNN) the composition is skewed to low complexity.

This chain is RCC1 domain-containing protein DDB_G0279253, found in Dictyostelium discoideum (Social amoeba).